A 171-amino-acid chain; its full sequence is Moubatin (171 aa).

Residues 1-15 (MMLVLTTLIFSFSAS) form the signal peptide. 3 disulfide bridges follow: Cys-23–Cys-144, Cys-55–Cys-166, and Cys-118–Cys-145.

It belongs to the calycin superfamily. Lipocalin family. The N-terminus is blocked. Expressed in salivary glands.

It localises to the secreted. Functionally, tick salivary platelet aggregation inhibitor that plays an important part in the anti-hemostatic strategy of ticks. Acts by scavenging thromboxane A2 (TXA2), a potent inducer of platelet aggregation and blood vessel constriction. As a consequence, is a specific inhibitor of collagen-induced platelet aggregation. In addition, it also acts as a potent inhibitor of TXA2-mediated vasoconstriction. Has also been found to bind leukotriene B4 (LTB4) (which also derives from arachidonic acid, as TXA2) with affinities in the nanomolar range. It does not interact with complement protein C5. This Ornithodoros moubata (Soft tick) protein is Moubatin.